The chain runs to 254 residues: U3 small nucleolar RNA-associated protein NOL7 (254 aa).

Positions 1 to 90 (MVQLRPRLSR…ASARRDKTLL (90 aa)) are disordered. Composition is skewed to acidic residues over residues 18-31 (MVDE…EEEA) and 48-61 (PLDE…EAPE). Positions 71–90 (EAREEELRVRASARRDKTLL) are enriched in basic and acidic residues. Residue Lys-127 forms a Glycyl lysine isopeptide (Lys-Gly) (interchain with G-Cter in SUMO2) linkage. Ser-129 bears the Phosphoserine mark. A Glycyl lysine isopeptide (Lys-Gly) (interchain with G-Cter in SUMO2) cross-link involves residue Lys-157. A disordered region spans residues 235 to 254 (NAKRFKKRWMAKKMKKKTYK).

The protein belongs to the UTP16 family. In terms of assembly, part of the small subunit (SSU) processome, composed of more than 70 proteins and the RNA chaperone small nucleolar RNA (snoRNA) U3.

The protein localises to the nucleus. It localises to the nucleolus. In terms of biological role, functions as part of the small subunit (SSU) processome, first precursor of the small eukaryotic ribosomal subunit that coordinates the first two steps of ribosome biogenesis in transcription of the primary transcript pre-RNA and pre-18S processing. During the assembly of the SSU processome in the nucleolus, many ribosome biogenesis factors, an RNA chaperone and ribosomal proteins associate with the nascent pre-rRNA and work in concert to generate RNA folding, modifications, rearrangements and cleavage as well as targeted degradation of pre-ribosomal RNA by the RNA exosome. This subunit is required for processing of the 5'-external transcribed spacer sequence (5'ETS) of the primary transcript pre-rRNA to yield the 18S rRNA. Also plays a role in maintaining early pre-rRNA levels, either by assisting in its transcription or stability. This Mus musculus (Mouse) protein is U3 small nucleolar RNA-associated protein NOL7 (Nol7).